The primary structure comprises 439 residues: Agnestins biosynthesis cluster transcriptional coactivator AgnL9 (439 aa).

Residues M79 to L149 form the HTH iclR-type domain. Positions M109–R128 form a DNA-binding region, H-T-H motif.

Its subcellular location is the nucleus. Transcriptional coactivator; part of the gene cluster that mediates the biosynthesis of agnestins, dihydroxy-xanthone metabolites. The protein is Agnestins biosynthesis cluster transcriptional coactivator AgnL9 of Paecilomyces divaricatus (Penicillium divaricatum).